Reading from the N-terminus, the 502-residue chain is Aspartyl/glutamyl-tRNA(Asn/Gln) amidotransferase subunit B (502 aa).

This sequence belongs to the GatB/GatE family. GatB subfamily. As to quaternary structure, heterotrimer of A, B and C subunits.

It carries out the reaction L-glutamyl-tRNA(Gln) + L-glutamine + ATP + H2O = L-glutaminyl-tRNA(Gln) + L-glutamate + ADP + phosphate + H(+). The enzyme catalyses L-aspartyl-tRNA(Asn) + L-glutamine + ATP + H2O = L-asparaginyl-tRNA(Asn) + L-glutamate + ADP + phosphate + 2 H(+). Its function is as follows. Allows the formation of correctly charged Asn-tRNA(Asn) or Gln-tRNA(Gln) through the transamidation of misacylated Asp-tRNA(Asn) or Glu-tRNA(Gln) in organisms which lack either or both of asparaginyl-tRNA or glutaminyl-tRNA synthetases. The reaction takes place in the presence of glutamine and ATP through an activated phospho-Asp-tRNA(Asn) or phospho-Glu-tRNA(Gln). The protein is Aspartyl/glutamyl-tRNA(Asn/Gln) amidotransferase subunit B of Ruegeria sp. (strain TM1040) (Silicibacter sp.).